The chain runs to 2055 residues: Citron Rho-interacting kinase (2055 aa).

Position 1 is an N-acetylmethionine (methionine 1). A Protein kinase domain is found at 97–359 (FEVRSLVGCG…FEGLCCHPFF (263 aa)). ATP is bound by residues 103-111 (VGCGHFAEV) and lysine 126. The Proton acceptor role is filled by aspartate 221. Positions 360–430 (ARTDWNNIRN…SKALGYLGRS (71 aa)) constitute an AGC-kinase C-terminal domain. A phosphoserine mark is found at serine 432, serine 439, serine 479, and serine 581. Coiled-coil stretches lie at residues 441–1086 (AKVS…QWEA), 1091–1247 (LGDE…VLYS), and 1275–1325 (AKKK…RKAT). The interval 1132 to 1328 (LAVKEHKAEI…AAHRKATDHP (197 aa)) is interaction with Rho/Rac. Tyrosine 1237 is subject to Phosphotyrosine. Positions 1316 to 1329 (REEAAHRKATDHPH) are enriched in basic and acidic residues. Disordered regions lie at residues 1316-1336 (REEA…PATA) and 1348-1377 (SPEH…EFSR). Low complexity predominate over residues 1353 to 1363 (PSAMSLLAPPS). Residues 1365–1377 (RRKESSTPEEFSR) are compositionally biased toward basic and acidic residues. Residues 1388 to 1437 (PHRFNVGLNMRATKCAVCLDTVHFGRQASKCLECQVMCHPKCSTCLPATC) form a Phorbol-ester/DAG-type zinc finger. Residues 1469 to 1589 (SLHLEGWMKV…WVTALESVVA (121 aa)) form the PH domain. Residues 1617 to 1907 (RLDMNCTLPF…RYLGPAISSG (291 aa)) form the CNH domain. Residue lysine 1747 is modified to N6-acetyllysine. The segment at 1932 to 2040 (SGTEQHRVPS…RGRLPAGAVR (109 aa)) is disordered. Residues 1939–1948 (VPSTSRSSPN) are compositionally biased toward polar residues. At serine 1966 the chain carries Phosphoserine. Positions 1974–2031 (SHPREPSTPHRYRDREGRTELRRDKSPGRPLEREKSPGRMLSTRRERSPGRLFEDSSR) are enriched in basic and acidic residues. The short motif at 1979–1984 (PSTPHR) is the SH3-binding element. The residue at position 2021 (serine 2021) is a Phosphoserine. Threonine 2041 is subject to Phosphothreonine.

It belongs to the protein kinase superfamily. AGC Ser/Thr protein kinase family. As to quaternary structure, interacts with TTC3. Homodimer. Directly interacts with KIF14 depending on the activation state (stronger interaction with the kinase-dead form). In terms of tissue distribution, a major signal was observed in testis and brain, but it was also detected in thymus, spleen, kidney, heart and lung.

It localises to the cytoplasm. The enzyme catalyses L-seryl-[protein] + ATP = O-phospho-L-seryl-[protein] + ADP + H(+). The catalysed reaction is L-threonyl-[protein] + ATP = O-phospho-L-threonyl-[protein] + ADP + H(+). Its function is as follows. Plays a role in cytokinesis. Required for KIF14 localization to the central spindle and midbody. Probable RHO/RAC effector that binds to the GTP-bound forms of RHO and RAC1. It probably binds p21 with a tighter specificity in vivo. Displays serine/threonine protein kinase activity. Plays an important role in the regulation of cytokinesis and the development of the central nervous system. Phosphorylates MYL9/MLC2. This Mus musculus (Mouse) protein is Citron Rho-interacting kinase (Cit).